Reading from the N-terminus, the 113-residue chain is Large ribosomal subunit protein bL17 (113 aa).

Belongs to the bacterial ribosomal protein bL17 family. In terms of assembly, part of the 50S ribosomal subunit. Contacts protein L32.

This Clostridium perfringens (strain ATCC 13124 / DSM 756 / JCM 1290 / NCIMB 6125 / NCTC 8237 / Type A) protein is Large ribosomal subunit protein bL17.